The following is a 772-amino-acid chain: Probable beta-glucosidase M (772 aa).

The first 20 residues, 1–20 (MLTSWGKTGFVLALALGGRA), serve as a signal peptide directing secretion. The N-linked (GlcNAc...) asparagine glycan is linked to Asn259. Residue Asp287 is part of the active site. N-linked (GlcNAc...) asparagine glycans are attached at residues Asn315, Asn322, Asn438, Asn523, Asn547, Asn574, and Asn586.

Belongs to the glycosyl hydrolase 3 family.

It is found in the secreted. The catalysed reaction is Hydrolysis of terminal, non-reducing beta-D-glucosyl residues with release of beta-D-glucose.. The protein operates within glycan metabolism; cellulose degradation. In terms of biological role, beta-glucosidases are one of a number of cellulolytic enzymes involved in the degradation of cellulosic biomass. Catalyzes the last step releasing glucose from the inhibitory cellobiose. This chain is Probable beta-glucosidase M (bglM), found in Emericella nidulans (strain FGSC A4 / ATCC 38163 / CBS 112.46 / NRRL 194 / M139) (Aspergillus nidulans).